A 60-amino-acid polypeptide reads, in one-letter code: Large ribosomal subunit protein bL33 (60 aa).

It belongs to the bacterial ribosomal protein bL33 family.

The sequence is that of Large ribosomal subunit protein bL33 from Chlorobium phaeobacteroides (strain DSM 266 / SMG 266 / 2430).